A 75-amino-acid polypeptide reads, in one-letter code: UPF0352 protein VV1166 (75 aa).

Belongs to the UPF0352 family.

The polypeptide is UPF0352 protein VV1166 (Vibrio vulnificus (strain YJ016)).